The following is a 307-amino-acid chain: UDP-N-acetylenolpyruvoylglucosamine reductase (307 aa).

Residues arginine 27–aspartate 193 form the FAD-binding PCMH-type domain. Residue arginine 172 is part of the active site. The active-site Proton donor is serine 222. Glutamate 299 is a catalytic residue.

This sequence belongs to the MurB family. It depends on FAD as a cofactor.

The protein resides in the cytoplasm. It catalyses the reaction UDP-N-acetyl-alpha-D-muramate + NADP(+) = UDP-N-acetyl-3-O-(1-carboxyvinyl)-alpha-D-glucosamine + NADPH + H(+). Its pathway is cell wall biogenesis; peptidoglycan biosynthesis. Cell wall formation. The polypeptide is UDP-N-acetylenolpyruvoylglucosamine reductase (Caulobacter sp. (strain K31)).